Reading from the N-terminus, the 734-residue chain is 5-methyltetrahydropteroyltriglutamate--homocysteine methyltransferase (734 aa).

Residues 15–18 (REFK) and Lys-104 each bind 5-methyltetrahydropteroyltri-L-glutamate. Residues 409–411 (IGS) and Glu-462 each bind L-homocysteine. Residues 409–411 (IGS) and Glu-462 each bind L-methionine. 5-methyltetrahydropteroyltri-L-glutamate is bound by residues 493 to 494 (RC) and Trp-539. Asp-577 lines the L-homocysteine pocket. Position 577 (Asp-577) interacts with L-methionine. 5-methyltetrahydropteroyltri-L-glutamate is bound at residue Glu-583. The Zn(2+) site is built by His-618, Cys-620, and Glu-642. Catalysis depends on His-672, which acts as the Proton donor. A Zn(2+)-binding site is contributed by Cys-704.

The protein belongs to the vitamin-B12 independent methionine synthase family. It depends on Zn(2+) as a cofactor.

It catalyses the reaction 5-methyltetrahydropteroyltri-L-glutamate + L-homocysteine = tetrahydropteroyltri-L-glutamate + L-methionine. The protein operates within amino-acid biosynthesis; L-methionine biosynthesis via de novo pathway; L-methionine from L-homocysteine (MetE route): step 1/1. Functionally, catalyzes the transfer of a methyl group from 5-methyltetrahydrofolate to homocysteine resulting in methionine formation. The sequence is that of 5-methyltetrahydropteroyltriglutamate--homocysteine methyltransferase from Thermotoga maritima (strain ATCC 43589 / DSM 3109 / JCM 10099 / NBRC 100826 / MSB8).